Here is a 784-residue protein sequence, read N- to C-terminus: Ribosome biogenesis protein BOP1 homolog (784 aa).

Residues 1–11 (MTKKLALKRKG) are compositionally biased toward basic residues. The segment at 1-159 (MTKKLALKRK…DSDTSDEEDI (159 aa)) is disordered. 4 stretches are compositionally biased toward acidic residues: residues 27–36 (SENEEEEEDL), 45–54 (EDSTDDEGID), 62–73 (SEELQFESDEEG), and 84–111 (AEED…EDEE). A compositionally biased stretch (basic and acidic residues) spans 112–123 (KDSKSKQADDKP). Residues 124 to 133 (SSSGAASKKA) show a composition bias toward low complexity. The segment covering 138–148 (LSKRDTSKPEY) has biased composition (basic and acidic residues). Residues 149-158 (QDSDTSDEED) show a composition bias toward acidic residues. WD repeat units lie at residues 445–486 (GHTD…RTIE), 488–526 (DEVV…KVLV), 570–612 (THFK…SQIP), 615–653 (KSKG…LVKK), 656–695 (TNSK…KPYQ), 699–738 (LHRN…DLLQ), and 754–784 (RDEF…RLYT).

This sequence belongs to the WD repeat BOP1/ERB1 family.

The protein resides in the nucleus. Its subcellular location is the nucleolus. The protein localises to the nucleoplasm. In terms of biological role, required for maturation of ribosomal RNAs and formation of the large ribosomal subunit. The protein is Ribosome biogenesis protein BOP1 homolog of Drosophila yakuba (Fruit fly).